The following is a 240-amino-acid chain: Anti-H(O) lectin (240 aa).

Residue asparagine 4 is glycosylated (N-linked (GlcNAc...) asparagine). Mn(2+) is bound by residues glutamate 124 and aspartate 126. 4 residues coordinate Ca(2+): aspartate 126, tyrosine 128, asparagine 130, and aspartate 133. Positions 133 and 141 each coordinate Mn(2+).

Belongs to the leguminous lectin family.

Functionally, L-fucose specific lectin. In Lotus tetragonolobus (Winged pea), this protein is Anti-H(O) lectin.